The chain runs to 273 residues: HMP-PP phosphatase (273 aa).

Asp8 serves as the catalytic Nucleophile. Mg(2+) contacts are provided by Asp8, Asp10, and Asp212.

It belongs to the HAD-like hydrolase superfamily. Cof family. Requires Mg(2+) as cofactor.

The catalysed reaction is 4-amino-2-methyl-5-(diphosphooxymethyl)pyrimidine + H2O = 4-amino-2-methyl-5-(phosphooxymethyl)pyrimidine + phosphate + H(+). Catalyzes the hydrolysis of 4-amino-2-methyl-5-hydroxymethylpyrimidine pyrophosphate (HMP-PP) to 4-amino-2-methyl-5-hydroxymethylpyrimidine phosphate (HMP-P). In Yersinia pseudotuberculosis serotype O:1b (strain IP 31758), this protein is HMP-PP phosphatase.